A 231-amino-acid polypeptide reads, in one-letter code: MMANIWWSLPLTLIVFFAARKLAARYKFPLLNPLLVAMVVIIPFLMLTGISYDSYFKGSEVLNDLLQPAVVALAYPLYEQLHQIRARWKSIITICFIGSVVAMVTGTSVALLMGASPEIAASILPKSVTTPIAMAVGGSIGGIPAISAVCVIFVGILGAVFGHTLLNAMRIRTKAARGLAMGTASHALGTARCAELDYQEGAFSSLALVLCGIITSLIAPFLFPIILAVMG.

Position 1 (Met1) is a topological domain, periplasmic. The helical transmembrane segment at 2–22 (MANIWWSLPLTLIVFFAARKL) threads the bilayer. At 23–29 (AARYKFP) the chain is on the cytoplasmic side. Residues 30 to 50 (LLNPLLVAMVVIIPFLMLTGI) traverse the membrane as a helical segment. Over 51–90 (SYDSYFKGSEVLNDLLQPAVVALAYPLYEQLHQIRARWKS) the chain is Periplasmic. Residues 91–111 (IITICFIGSVVAMVTGTSVAL) form a helical membrane-spanning segment. The Cytoplasmic segment spans residues 112–118 (LMGASPE). Transmembrane regions (helical) follow at residues 119–139 (IAAS…VGGS) and 140–160 (IGGI…LGAV). The Cytoplasmic segment spans residues 161 to 208 (FGHTLLNAMRIRTKAARGLAMGTASHALGTARCAELDYQEGAFSSLAL). A helical transmembrane segment spans residues 209–229 (VLCGIITSLIAPFLFPIILAV). Over 230 to 231 (MG) the chain is Periplasmic.

Belongs to the YohK (E.coli)/YwbG (IPA-22R) (B.subtilis) family.

Its subcellular location is the cell inner membrane. This chain is Inner membrane protein YohK (yohK), found in Escherichia coli (strain K12).